Reading from the N-terminus, the 498-residue chain is WD repeat-containing protein 55 homolog (498 aa).

A disordered region spans residues 1 to 131 (MHTHNNFKTP…ATFDLDEDDE (131 aa)). Acidic residues-rich tracts occupy residues 12–23 (DEDELDDLDEDM) and 31–48 (IEQE…EYDL). Composition is skewed to low complexity over residues 67-82 (NDSS…NAAD) and 93-103 (AGGVTAGGATS). 6 WD repeats span residues 154–193 (KLED…NKLL), 198–237 (VHSK…LKKL), 241–279 (AHDD…AIFE), 282–321 (ELED…MYVQ), 324–363 (PYEE…YHCD), and 408–447 (QHNM…DFGD). The segment at 478–498 (DLTKENADGDDDPGAGPSNMA) is disordered.

This sequence belongs to the WD repeat WDR55 family.

The polypeptide is WD repeat-containing protein 55 homolog (Drosophila melanogaster (Fruit fly)).